Here is a 301-residue protein sequence, read N- to C-terminus: Protein KTI12 homolog (301 aa).

8–15 (GQPCSGKS) is an ATP binding site. The segment at 262 to 275 (LRRTFIKLAGQYSL) is calmodulin-binding.

This sequence belongs to the KTI12 family. As to quaternary structure, interacts with the elongator complex. Binds to calmodulin in a calcium-dependent manner.

It localises to the cytoplasm. The protein resides in the nucleus. In terms of biological role, elongator complex-associated factor that is not a structural subunit but rather transiently contacts the complex. Regulates both meristem activity and organ growth; acts as a positive regulator of adaxial leaf patterning. Required for an early step in synthesis of 5-carbamoylmethyl (ncm5) groups present on uridines (ncm5U) at the wobble position in tRNA. This is Protein KTI12 homolog from Oryza sativa subsp. indica (Rice).